The following is a 407-amino-acid chain: Cysteine desulfurase (407 aa).

Lys226 bears the N6-(pyridoxal phosphate)lysine mark. Cys364 acts as the Cysteine persulfide intermediate in catalysis.

Belongs to the class-V pyridoxal-phosphate-dependent aminotransferase family. Csd subfamily. As to quaternary structure, homodimer. Interacts with SufE and the SufBCD complex composed of SufB, SufC and SufD. The interaction with SufE is required to mediate the direct transfer of the sulfur atom from the S-sulfanylcysteine. The cofactor is pyridoxal 5'-phosphate.

It localises to the cytoplasm. The catalysed reaction is (sulfur carrier)-H + L-cysteine = (sulfur carrier)-SH + L-alanine. It carries out the reaction L-selenocysteine + AH2 = hydrogenselenide + L-alanine + A + H(+). It participates in cofactor biosynthesis; iron-sulfur cluster biosynthesis. Functionally, cysteine desulfurases mobilize the sulfur from L-cysteine to yield L-alanine, an essential step in sulfur metabolism for biosynthesis of a variety of sulfur-containing biomolecules. Component of the suf operon, which is activated and required under specific conditions such as oxidative stress and iron limitation. Acts as a potent selenocysteine lyase in vitro, that mobilizes selenium from L-selenocysteine. Selenocysteine lyase activity is however unsure in vivo. The polypeptide is Cysteine desulfurase (Pectobacterium carotovorum subsp. carotovorum (strain PC1)).